Here is an 84-residue protein sequence, read N- to C-terminus: ICP35 (84 aa).

The sequence is that of ICP35 from Crustacea (WSSV).